Consider the following 426-residue polypeptide: MLDIKQIRENPQLIQERLNSRSGTYDIQPILQLDKQQRELEATRSQIQARSNEIGKIVGQKIKSGINPQDPEIQALRDEGNSIKAQLSELEPREKELKAEIEQLILALPNLPSDSTPIGKSEEENVEVRRWGDEYLPQNPNIIPHWEIGEKLGILNFERAVKVAQSRFVNLIGAGAALERALINFMLKTQTVAGYVEVSPPLLVNTDSLTGTGQLPKFAEESFKCADDELWLIPTAEVPVTNLYRGEILAAENLPIYHCAYTPCFRREAGSYGRDMRGLIRLHQFNKVELVKVVHPSTSFDELEKLVGNAEAILQALKLPYRVINLCTGDLGFGATKTYDLEVWLPSSGKYREISSCSNCFDFQARRADIRFKEAGKKGTQFVHTLNGSGLAVGRTMAAILENYQQPDGTILIPEVLQVYLGREVL.

235-237 serves as a coordination point for L-serine; the sequence is TAE. Position 266–268 (266–268) interacts with ATP; the sequence is RRE. Glu289 serves as a coordination point for L-serine. ATP is bound at residue 353 to 356; the sequence is EISS. L-serine is bound at residue Ser389.

This sequence belongs to the class-II aminoacyl-tRNA synthetase family. Type-1 seryl-tRNA synthetase subfamily. In terms of assembly, homodimer. The tRNA molecule binds across the dimer.

The protein resides in the cytoplasm. The enzyme catalyses tRNA(Ser) + L-serine + ATP = L-seryl-tRNA(Ser) + AMP + diphosphate + H(+). The catalysed reaction is tRNA(Sec) + L-serine + ATP = L-seryl-tRNA(Sec) + AMP + diphosphate + H(+). Its pathway is aminoacyl-tRNA biosynthesis; selenocysteinyl-tRNA(Sec) biosynthesis; L-seryl-tRNA(Sec) from L-serine and tRNA(Sec): step 1/1. Its function is as follows. Catalyzes the attachment of serine to tRNA(Ser). Is also able to aminoacylate tRNA(Sec) with serine, to form the misacylated tRNA L-seryl-tRNA(Sec), which will be further converted into selenocysteinyl-tRNA(Sec). The sequence is that of Serine--tRNA ligase from Trichormus variabilis (strain ATCC 29413 / PCC 7937) (Anabaena variabilis).